Here is a 296-residue protein sequence, read N- to C-terminus: 4-hydroxy-tetrahydrodipicolinate synthase (296 aa).

Threonine 49 lines the pyruvate pocket. Catalysis depends on tyrosine 137, which acts as the Proton donor/acceptor. Catalysis depends on lysine 165, which acts as the Schiff-base intermediate with substrate. Isoleucine 207 contributes to the pyruvate binding site.

Belongs to the DapA family. As to quaternary structure, homotetramer; dimer of dimers.

Its subcellular location is the cytoplasm. It carries out the reaction L-aspartate 4-semialdehyde + pyruvate = (2S,4S)-4-hydroxy-2,3,4,5-tetrahydrodipicolinate + H2O + H(+). Its pathway is amino-acid biosynthesis; L-lysine biosynthesis via DAP pathway; (S)-tetrahydrodipicolinate from L-aspartate: step 3/4. Catalyzes the condensation of (S)-aspartate-beta-semialdehyde [(S)-ASA] and pyruvate to 4-hydroxy-tetrahydrodipicolinate (HTPA). This is 4-hydroxy-tetrahydrodipicolinate synthase from Bradyrhizobium diazoefficiens (strain JCM 10833 / BCRC 13528 / IAM 13628 / NBRC 14792 / USDA 110).